The chain runs to 260 residues: Proteasome subunit alpha (260 aa).

This sequence belongs to the peptidase T1A family. As to quaternary structure, the 20S proteasome core is composed of 14 alpha and 14 beta subunits that assemble into four stacked heptameric rings, resulting in a barrel-shaped structure. The two inner rings, each composed of seven catalytic beta subunits, are sandwiched by two outer rings, each composed of seven alpha subunits. The catalytic chamber with the active sites is on the inside of the barrel. Has a gated structure, the ends of the cylinder being occluded by the N-termini of the alpha-subunits. Is capped at one or both ends by the proteasome regulatory ATPase, PAN.

The protein resides in the cytoplasm. The formation of the proteasomal ATPase PAN-20S proteasome complex, via the docking of the C-termini of PAN into the intersubunit pockets in the alpha-rings, triggers opening of the gate for substrate entry. Interconversion between the open-gate and close-gate conformations leads to a dynamic regulation of the 20S proteasome proteolysis activity. In terms of biological role, component of the proteasome core, a large protease complex with broad specificity involved in protein degradation. The sequence is that of Proteasome subunit alpha from Thermococcus sp. (strain JCM 11816 / KS-1).